The following is a 354-amino-acid chain: S-adenosylmethionine:tRNA ribosyltransferase-isomerase (354 aa).

This sequence belongs to the QueA family. Monomer.

The protein resides in the cytoplasm. The enzyme catalyses 7-aminomethyl-7-carbaguanosine(34) in tRNA + S-adenosyl-L-methionine = epoxyqueuosine(34) in tRNA + adenine + L-methionine + 2 H(+). It participates in tRNA modification; tRNA-queuosine biosynthesis. Its function is as follows. Transfers and isomerizes the ribose moiety from AdoMet to the 7-aminomethyl group of 7-deazaguanine (preQ1-tRNA) to give epoxyqueuosine (oQ-tRNA). The polypeptide is S-adenosylmethionine:tRNA ribosyltransferase-isomerase (Pseudomonas savastanoi pv. phaseolicola (strain 1448A / Race 6) (Pseudomonas syringae pv. phaseolicola (strain 1448A / Race 6))).